Here is a 288-residue protein sequence, read N- to C-terminus: 2-hydroxy-6-oxononadienedioate/2-hydroxy-6-oxononatrienedioate hydrolase (288 aa).

The AB hydrolase-1 domain maps to Val-38 to His-273. His-267 acts as the Proton acceptor in catalysis.

The protein belongs to the AB hydrolase superfamily. MhpC family. As to quaternary structure, homodimer.

The catalysed reaction is (2Z,4E)-2-hydroxy-6-oxonona-2,4-dienedioate + H2O = (2Z)-2-hydroxypenta-2,4-dienoate + succinate + H(+). It catalyses the reaction (2Z,4E,7E)-2-hydroxy-6-oxonona-2,4,7-trienedioate + H2O = (2Z)-2-hydroxypenta-2,4-dienoate + fumarate + H(+). It functions in the pathway aromatic compound metabolism; 3-phenylpropanoate degradation. Its function is as follows. Catalyzes the cleavage of the C5-C6 bond of 2-hydroxy-6-oxononadienedioate and 2-hydroxy-6-oxononatrienedioate, a dienol ring fission product of the bacterial meta-cleavage pathway for degradation of phenylpropionic acid. In Escherichia coli O139:H28 (strain E24377A / ETEC), this protein is 2-hydroxy-6-oxononadienedioate/2-hydroxy-6-oxononatrienedioate hydrolase.